The chain runs to 509 residues: MAAAAGMLLLGLLQAGGSVLGQAMEKVTGGNLLSMLLIACAFTLSLVYLIRLAAGHLVQLPAGVKSPPYIFSPIPFLGHAIAFGKSPIEFLENAYEKYGPVFSFTMVGKTFTYLLGSDAAALLFNSKNEDLNAEDVYSRLTTPVFGKGVAYDVPNPVFLEQKKMLKSGLNIAHFKQHVSIIEKETKEYFESWGESGEKNVFEALSELIILTASHCLHGKEIRSQLNEKVAQLYADLDGGFSHAAWLLPGWLPLPSFRRRDRAHREIKDIFYKAIQKRRQSQEKIDDILQTLLDATYKDGRPLTDDEVAGMLIGLLLAGQHTSSTTSAWMGFFLARDKTLQKKCYLEQKTVCGENLPPLTYDQLKDLNLLDRCIKETLRLRPPIMIMMRMARTPQTVAGYTIPPGHQVCVSPTVNQRLKDSWVERLDFNPDRYLQDNPASGEKFAYVPFGAGRHRCIGENFAYVQIKTIWSTMLRLYEFDLIDGYFPTVNYTTMIHTPENPVIRYKRRSK.

A helical membrane pass occupies residues 30 to 50; sequence GNLLSMLLIACAFTLSLVYLI. Position 455 (cysteine 455) interacts with heme.

The protein belongs to the cytochrome P450 family. The cofactor is heme. In terms of processing, ubiquitinated by MARCHF6, leading to proteasomal degradation. Ubiquitously expressed with highest levels in testis, ovary, adrenal, prostate, liver, kidney and lung.

The protein resides in the endoplasmic reticulum membrane. It is found in the microsome membrane. The catalysed reaction is a 14alpha-methyl steroid + 3 reduced [NADPH--hemoprotein reductase] + 3 O2 = a Delta(14) steroid + formate + 3 oxidized [NADPH--hemoprotein reductase] + 4 H2O + 4 H(+). It carries out the reaction lanosterol + 3 reduced [NADPH--hemoprotein reductase] + 3 O2 = 4,4-dimethyl-5alpha-cholesta-8,14,24-trien-3beta-ol + formate + 3 oxidized [NADPH--hemoprotein reductase] + 4 H2O + 4 H(+). The enzyme catalyses 24,25-dihydrolanosterol + 3 reduced [NADPH--hemoprotein reductase] + 3 O2 = 4,4-dimethyl-8,14-cholestadien-3beta-ol + formate + 3 oxidized [NADPH--hemoprotein reductase] + 4 H2O + 4 H(+). It catalyses the reaction a 14alpha-methyl steroid + reduced [NADPH--hemoprotein reductase] + O2 = a 14alpha-hydroxymethyl steroid + oxidized [NADPH--hemoprotein reductase] + H2O + H(+). The catalysed reaction is a 14alpha-hydroxymethyl steroid + reduced [NADPH--hemoprotein reductase] + O2 = a 14alpha-formyl steroid + oxidized [NADPH--hemoprotein reductase] + 2 H2O + H(+). It carries out the reaction a 14alpha-formyl steroid + reduced [NADPH--hemoprotein reductase] + O2 = a Delta(14) steroid + formate + oxidized [NADPH--hemoprotein reductase] + H2O + 2 H(+). The enzyme catalyses lanosterol + reduced [NADPH--hemoprotein reductase] + O2 = 32-hydroxylanosterol + oxidized [NADPH--hemoprotein reductase] + H2O + H(+). It catalyses the reaction 32-hydroxylanosterol + reduced [NADPH--hemoprotein reductase] + O2 = 32-oxolanosterol + oxidized [NADPH--hemoprotein reductase] + 2 H2O + H(+). The catalysed reaction is 32-oxolanosterol + reduced [NADPH--hemoprotein reductase] + O2 = 4,4-dimethyl-5alpha-cholesta-8,14,24-trien-3beta-ol + formate + oxidized [NADPH--hemoprotein reductase] + H2O + 2 H(+). It carries out the reaction 24,25-dihydrolanosterol + reduced [NADPH--hemoprotein reductase] + O2 = 32-hydroxy-24,25-dihydrolanosterol + oxidized [NADPH--hemoprotein reductase] + H2O + H(+). The enzyme catalyses 32-hydroxy-24,25-dihydrolanosterol + reduced [NADPH--hemoprotein reductase] + O2 = 32-oxo-24,25-dihydrolanosterol + oxidized [NADPH--hemoprotein reductase] + 2 H2O + H(+). It catalyses the reaction 32-oxo-24,25-dihydrolanosterol + reduced [NADPH--hemoprotein reductase] + O2 = 4,4-dimethyl-8,14-cholestadien-3beta-ol + formate + oxidized [NADPH--hemoprotein reductase] + H2O + 2 H(+). Its pathway is steroid biosynthesis; zymosterol biosynthesis; zymosterol from lanosterol: step 1/6. Inhibited by azalanstat. Inhibited by azole antifungal agents ketoconazole, itraconazole and fluconazole. Sterol 14alpha-demethylase that plays a critical role in the cholesterol biosynthesis pathway, being cholesterol the major sterol component in mammalian membranes as well as a precursor for bile acid and steroid hormone synthesis. Cytochrome P450 monooxygenase that catalyzes the three-step oxidative removal of the 14alpha-methyl group (C-32) of sterols such as lanosterol (lanosta-8,24-dien-3beta-ol) and 24,25-dihydrolanosterol (DHL) in the form of formate, and converts the sterols to 4,4-dimethyl-5alpha-cholesta-8,14,24-trien-3beta-ol and 4,4-dimethyl-8,14-cholestadien-3beta-ol, respectively, which are intermediates of cholesterol biosynthesis. Can also demethylate substrates not intrinsic to mammals, such as eburicol (24-methylene-24,25-dihydrolanosterol), but at a lower rate than DHL. In Homo sapiens (Human), this protein is Lanosterol 14-alpha demethylase.